We begin with the raw amino-acid sequence, 176 residues long: Putative L,D-transpeptidase YqjB (176 aa).

Residues 1–25 (MRFFLCSIFMMISPIWPLGENPLPG) form the signal peptide. Residues 27-151 (PYVIVNKRTN…IPVGTRVLIT (125 aa)) enclose the L,D-TPase catalytic domain. His-111 acts as the Proton donor/acceptor in catalysis. Cys-127 serves as the catalytic Nucleophile.

Belongs to the YkuD family.

The protein operates within cell wall biogenesis; peptidoglycan biosynthesis. The protein is Putative L,D-transpeptidase YqjB (yqjB) of Bacillus subtilis (strain 168).